Consider the following 339-residue polypeptide: Bifunctional protein GlmU (339 aa).

The segment at 1–234 (MKKENPLAIV…PKDVLGVNSR (234 aa)) is pyrophosphorylase. Residues 12-15 (LAAG), Lys26, Gln77, and 82-83 (GT) contribute to the UDP-N-acetyl-alpha-D-glucosamine site. Position 107 (Asp107) interacts with Mg(2+). Residues Gly144, Glu159, Asn174, and Asn232 each coordinate UDP-N-acetyl-alpha-D-glucosamine. Mg(2+) is bound at residue Asn232. The segment at 235-255 (IELAMADEELRMRRNREVMLT) is linker. Residues 256–339 (GVSMILPATI…KIPAQQREEE (84 aa)) form an N-acetyltransferase region.

It belongs to the N-acetylglucosamine-1-phosphate uridyltransferase family. Homotrimer. Mg(2+) serves as cofactor.

It is found in the cytoplasm. It carries out the reaction alpha-D-glucosamine 1-phosphate + acetyl-CoA = N-acetyl-alpha-D-glucosamine 1-phosphate + CoA + H(+). It catalyses the reaction N-acetyl-alpha-D-glucosamine 1-phosphate + UTP + H(+) = UDP-N-acetyl-alpha-D-glucosamine + diphosphate. It participates in nucleotide-sugar biosynthesis; UDP-N-acetyl-alpha-D-glucosamine biosynthesis; N-acetyl-alpha-D-glucosamine 1-phosphate from alpha-D-glucosamine 6-phosphate (route II): step 2/2. The protein operates within nucleotide-sugar biosynthesis; UDP-N-acetyl-alpha-D-glucosamine biosynthesis; UDP-N-acetyl-alpha-D-glucosamine from N-acetyl-alpha-D-glucosamine 1-phosphate: step 1/1. Its pathway is bacterial outer membrane biogenesis; LPS lipid A biosynthesis. Its function is as follows. Catalyzes the last two sequential reactions in the de novo biosynthetic pathway for UDP-N-acetylglucosamine (UDP-GlcNAc). The C-terminal domain catalyzes the transfer of acetyl group from acetyl coenzyme A to glucosamine-1-phosphate (GlcN-1-P) to produce N-acetylglucosamine-1-phosphate (GlcNAc-1-P), which is converted into UDP-GlcNAc by the transfer of uridine 5-monophosphate (from uridine 5-triphosphate), a reaction catalyzed by the N-terminal domain. The polypeptide is Bifunctional protein GlmU (glmU) (Desulfotalea psychrophila (strain LSv54 / DSM 12343)).